Consider the following 172-residue polypeptide: Sec-independent protein translocase protein TatB (172 aa).

A helical transmembrane segment spans residues 1–21 (MIDLGISKLALIGAVALVVIG). The interval 97 to 129 (GDPASRQTATQAAEWRPAPAKSRNGRNSWRNKQ) is disordered.

It belongs to the TatB family. As to quaternary structure, the Tat system comprises two distinct complexes: a TatABC complex, containing multiple copies of TatA, TatB and TatC subunits, and a separate TatA complex, containing only TatA subunits. Substrates initially bind to the TatABC complex, which probably triggers association of the separate TatA complex to form the active translocon.

The protein localises to the cell inner membrane. Part of the twin-arginine translocation (Tat) system that transports large folded proteins containing a characteristic twin-arginine motif in their signal peptide across membranes. Together with TatC, TatB is part of a receptor directly interacting with Tat signal peptides. TatB may form an oligomeric binding site that transiently accommodates folded Tat precursor proteins before their translocation. This chain is Sec-independent protein translocase protein TatB, found in Ralstonia nicotianae (strain ATCC BAA-1114 / GMI1000) (Ralstonia solanacearum).